The sequence spans 198 residues: Recombination protein RecR (198 aa).

A C4-type zinc finger spans residues Cys57 to Cys72. Residues Thr80–Ala175 form the Toprim domain.

The protein belongs to the RecR family.

Functionally, may play a role in DNA repair. It seems to be involved in an RecBC-independent recombinational process of DNA repair. It may act with RecF and RecO. The protein is Recombination protein RecR of Streptococcus thermophilus (strain CNRZ 1066).